The sequence spans 360 residues: Mannonate dehydratase (360 aa).

It belongs to the mannonate dehydratase family. Requires Fe(2+) as cofactor. The cofactor is Mn(2+).

The enzyme catalyses D-mannonate = 2-dehydro-3-deoxy-D-gluconate + H2O. Its pathway is carbohydrate metabolism; pentose and glucuronate interconversion. Its function is as follows. Catalyzes the dehydration of D-mannonate. The chain is Mannonate dehydratase from Thermotoga sp. (strain RQ2).